A 49-amino-acid polypeptide reads, in one-letter code: Glutathione peroxidase (49 aa).

The protein belongs to the glutathione peroxidase family.

It catalyses the reaction 2 glutathione + H2O2 = glutathione disulfide + 2 H2O. With respect to regulation, inhibited by Cu(2+), SDS and DTT. Activity is slightly increased by Fe(2+), Mn(2+), triton X-100 and EDTA. Functionally, glutathione peroxidase which may protect the cell from oxidative damage. This is Glutathione peroxidase from Lactiplantibacillus plantarum (Lactobacillus plantarum).